Reading from the N-terminus, the 409-residue chain is Tryptophan synthase beta chain (409 aa).

K92 carries the post-translational modification N6-(pyridoxal phosphate)lysine.

It belongs to the TrpB family. In terms of assembly, tetramer of two alpha and two beta chains. Pyridoxal 5'-phosphate serves as cofactor.

The catalysed reaction is (1S,2R)-1-C-(indol-3-yl)glycerol 3-phosphate + L-serine = D-glyceraldehyde 3-phosphate + L-tryptophan + H2O. It functions in the pathway amino-acid biosynthesis; L-tryptophan biosynthesis; L-tryptophan from chorismate: step 5/5. In terms of biological role, the beta subunit is responsible for the synthesis of L-tryptophan from indole and L-serine. The sequence is that of Tryptophan synthase beta chain (trpB) from Methanococcus voltae.